The following is a 164-amino-acid chain: Protein SprT (164 aa).

Positions 13–156 constitute a SprT-like domain; the sequence is YQQAEAFFKR…LCRRCREPLV (144 aa). H69 contributes to the Zn(2+) binding site. The active site involves E70. H73 serves as a coordination point for Zn(2+).

It belongs to the SprT family. It depends on Zn(2+) as a cofactor.

Its subcellular location is the cytoplasm. The chain is Protein SprT from Pseudomonas syringae pv. syringae (strain B728a).